A 485-amino-acid chain; its full sequence is Cysteine--tRNA ligase (485 aa).

Cysteine 27 is a binding site for Zn(2+). Residues 29 to 39 (ITAYDLCHIGH) carry the 'HIGH' region motif. Positions 208, 233, and 237 each coordinate Zn(2+). Residues 265-269 (KMSKS) carry the 'KMSKS' region motif. Lysine 268 is a binding site for ATP.

Belongs to the class-I aminoacyl-tRNA synthetase family. Monomer. The cofactor is Zn(2+).

It is found in the cytoplasm. The catalysed reaction is tRNA(Cys) + L-cysteine + ATP = L-cysteinyl-tRNA(Cys) + AMP + diphosphate. The protein is Cysteine--tRNA ligase of Nitratidesulfovibrio vulgaris (strain DP4) (Desulfovibrio vulgaris).